The primary structure comprises 534 residues: Protein TIC 62, chloroplastic (534 aa).

The N-terminal 64 residues, 1–64 (MPMEVFSLTS…SSSSSSSSIR (64 aa)), are a transit peptide targeting the chloroplast. The segment at 50 to 83 (NNRIRSSSSSSSSIRAQASGSTKSSTAEGIPEKT) is disordered. Positions 63-76 (IRAQASGSTKSSTA) are enriched in polar residues. 91–120 (VFVAGATGKVGSRTVRELIKLGFKVRAGVR) is an NADP(+) binding site. The interval 334–534 (PSQRPYIPSP…ASPSPSFRKS (201 aa)) is disordered. Residues 350 to 360 (DTATVSNTGPS) are compositionally biased toward polar residues. Repeat unit 1 spans residues 387 to 408 (PLSPYTAYDDLKPPSSPSPTKP). The tract at residues 387 to 532 (PLSPYTAYDD…PPASPSPSFR (146 aa)) is 3 X 22 AA approximate repeats. The segment covering 421 to 432 (PTPISSDTPSSI) has biased composition (low complexity). Repeat 2 spans residues 450 to 471 (SLSPYAAYPDLKPPSSPSPSVP). Pro residues predominate over residues 460-469 (LKPPSSPSPS). The span at 495-509 (DTPKNEEQHLHEPKS) shows a compositional bias: basic and acidic residues. The stretch at 511-532 (PLSPYAMYEDLKPPASPSPSFR) is repeat 3.

Part of the Tic complex. Interacts with TIC40, TIC110 and TIC55. Interacts (via C-terminus) with PETH/FNR.

The protein localises to the plastid. It localises to the chloroplast inner membrane. Its subcellular location is the chloroplast stroma. Involved in protein precursor import into chloroplasts. Part of the redox regulon consisting of TIC32, TIC 55 and TIC62. Has a NADPH-dependent dehydrogenase activity, but only after preincubation with lipids. This is Protein TIC 62, chloroplastic (TIC62) from Pisum sativum (Garden pea).